Consider the following 155-residue polypeptide: Ribosome maturation factor RimP (155 aa).

Belongs to the RimP family.

The protein localises to the cytoplasm. Its function is as follows. Required for maturation of 30S ribosomal subunits. This chain is Ribosome maturation factor RimP, found in Deinococcus geothermalis (strain DSM 11300 / CIP 105573 / AG-3a).